The sequence spans 600 residues: Adenine deaminase (600 aa).

It belongs to the metallo-dependent hydrolases superfamily. Adenine deaminase family. Mn(2+) is required as a cofactor.

The enzyme catalyses adenine + H2O + H(+) = hypoxanthine + NH4(+). The sequence is that of Adenine deaminase from Bradyrhizobium sp. (strain BTAi1 / ATCC BAA-1182).